The following is a 237-amino-acid chain: Ribonuclease PH (237 aa).

Phosphate contacts are provided by residues R86 and 124-126 (GTR).

This sequence belongs to the RNase PH family. In terms of assembly, homohexameric ring arranged as a trimer of dimers.

It catalyses the reaction tRNA(n+1) + phosphate = tRNA(n) + a ribonucleoside 5'-diphosphate. Phosphorolytic 3'-5' exoribonuclease that plays an important role in tRNA 3'-end maturation. Removes nucleotide residues following the 3'-CCA terminus of tRNAs; can also add nucleotides to the ends of RNA molecules by using nucleoside diphosphates as substrates, but this may not be physiologically important. Probably plays a role in initiation of 16S rRNA degradation (leading to ribosome degradation) during starvation. This chain is Ribonuclease PH, found in Shewanella sp. (strain ANA-3).